The sequence spans 957 residues: Valine--tRNA ligase (957 aa).

The 'HIGH' region motif lies at 42–52 (PNVTGSLHMGH). Residues 554 to 558 (KMSKS) carry the 'KMSKS' region motif. Residue K557 coordinates ATP. Residues 890–956 (DKDAELARLA…LEAQQETIAA (67 aa)) are a coiled coil.

Belongs to the class-I aminoacyl-tRNA synthetase family. ValS type 1 subfamily. Monomer.

It localises to the cytoplasm. The catalysed reaction is tRNA(Val) + L-valine + ATP = L-valyl-tRNA(Val) + AMP + diphosphate. Functionally, catalyzes the attachment of valine to tRNA(Val). As ValRS can inadvertently accommodate and process structurally similar amino acids such as threonine, to avoid such errors, it has a 'posttransfer' editing activity that hydrolyzes mischarged Thr-tRNA(Val) in a tRNA-dependent manner. The protein is Valine--tRNA ligase of Aliivibrio fischeri (strain ATCC 700601 / ES114) (Vibrio fischeri).